We begin with the raw amino-acid sequence, 706 residues long: Protein-glutamine gamma-glutamyltransferase 6 (706 aa).

Ca(2+)-binding residues include Ala223, Asn226, and Asn228. Cys274 is an active-site residue. Positions 303, 305, 307, 309, and 327 each coordinate Ca(2+). Residues His333 and Asp356 contribute to the active site. Ca(2+) is bound by residues Asn396, Thr417, Glu445, and Glu450.

This sequence belongs to the transglutaminase superfamily. Transglutaminase family. It depends on Ca(2+) as a cofactor.

The protein resides in the cytoplasm. It carries out the reaction L-glutaminyl-[protein] + L-lysyl-[protein] = [protein]-L-lysyl-N(6)-5-L-glutamyl-[protein] + NH4(+). Its function is as follows. Catalyzes the cross-linking of proteins and the conjugation of polyamines to proteins. The sequence is that of Protein-glutamine gamma-glutamyltransferase 6 (TGM6) from Homo sapiens (Human).